The primary structure comprises 209 residues: Nascent polypeptide-associated complex subunit alpha (209 aa).

Positions 1–21 are enriched in basic and acidic residues; that stretch reads MSNPRVEELPDEEPKKTTVQE. Disordered regions lie at residues 1 to 51 and 121 to 175; these read MSNP…HNRN and QLAS…DKDI. Positions 22 to 36 are enriched in acidic residues; that stretch reads HEDDSSDDSEVEEVG. An NAC-A/B domain is found at 49-114; it reads NRNEKKARKA…AKIEDVNAAA (66 aa). The segment covering 127-150 has biased composition (basic and acidic residues); the sequence is AEDHSGHNHGEPSKAVEADEKKED. Positions 151 to 166 are enriched in acidic residues; sequence KEDDEDEEEEEEEEVD. Residues 170-209 enclose the UBA domain; that stretch reads LEDKDIELVMTQANVSRNKAVKALKENDNDIVNSIMALSI.

The protein belongs to the NAC-alpha family. As to quaternary structure, part of the nascent polypeptide-associated complex (NAC), consisting of EGD2 and EGD1. NAC associates with ribosomes via EGD1.

The protein resides in the cytoplasm. Its subcellular location is the nucleus. Component of the nascent polypeptide-associated complex (NAC), a dynamic component of the ribosomal exit tunnel, protecting the emerging polypeptides from interaction with other cytoplasmic proteins to ensure appropriate nascent protein targeting. The NAC complex also promotes mitochondrial protein import by enhancing productive ribosome interactions with the outer mitochondrial membrane and blocks the inappropriate interaction of ribosomes translating non-secretory nascent polypeptides with translocation sites in the membrane of the endoplasmic reticulum. EGD2 may also be involved in transcription regulation. The chain is Nascent polypeptide-associated complex subunit alpha (EGD2) from Gibberella zeae (strain ATCC MYA-4620 / CBS 123657 / FGSC 9075 / NRRL 31084 / PH-1) (Wheat head blight fungus).